The chain runs to 1105 residues: uncharacterized protein (1105 aa).

This sequence belongs to the mycobacterial PPE family.

This is an uncharacterized protein from Mycobacterium tuberculosis (strain CDC 1551 / Oshkosh).